The sequence spans 602 residues: Elongation factor 4 (602 aa).

The 183-residue stretch at 6-188 (DHIRNFSIVA…AIVNKLPAPK (183 aa)) folds into the tr-type G domain. GTP is bound by residues 18–23 (DHGKST) and 135–138 (NKID).

It belongs to the TRAFAC class translation factor GTPase superfamily. Classic translation factor GTPase family. LepA subfamily.

It is found in the cell inner membrane. It catalyses the reaction GTP + H2O = GDP + phosphate + H(+). Functionally, required for accurate and efficient protein synthesis under certain stress conditions. May act as a fidelity factor of the translation reaction, by catalyzing a one-codon backward translocation of tRNAs on improperly translocated ribosomes. Back-translocation proceeds from a post-translocation (POST) complex to a pre-translocation (PRE) complex, thus giving elongation factor G a second chance to translocate the tRNAs correctly. Binds to ribosomes in a GTP-dependent manner. This Brucella abortus (strain 2308) protein is Elongation factor 4.